Consider the following 362-residue polypeptide: Zinc transporter 9 (362 aa).

The N-terminal stretch at 1–21 (MAFDLKLTACLLLAVFSLAAA) is a signal peptide. Over 22-42 (ADCECQPSDEGHDAAKSRTLK) the chain is Extracellular. A helical transmembrane segment spans residues 43 to 63 (VIAIFCILVGSSAGCAIPSLG). Residues 64-74 (RRFPALRPDTS) are Cytoplasmic-facing. A helical membrane pass occupies residues 75-95 (LFFALKAFAAGVILATAFVHI). Residues 96–120 (LPVSFDKLGSPCLVDGPWRKYPFTG) lie on the Extracellular side of the membrane. The helical transmembrane segment at 121–141 (LVAMLAAVATLLLDTIATGYF) threads the bilayer. Over 142 to 207 (LQRAQDSRGA…EDRAKLVRHR (66 aa)) the chain is Cytoplasmic. A helical transmembrane segment spans residues 208-228 (VISQVFELGIIVHSIIIGISL). Residues 229–239 (GASESPSTIRP) lie on the Extracellular side of the membrane. The chain crosses the membrane as a helical span at residues 240-260 (LVAALTFHQFFEGIGLGGCIV). Residues 261-269 (QARFHLKSA) are Cytoplasmic-facing. The chain crosses the membrane as a helical span at residues 270-290 (VTMAIFFSLTTPVGIMIGIGI). The Extracellular segment spans residues 291-301 (SSAYNENSPTA). A helical transmembrane segment spans residues 302 to 322 (LIVEGILDAAAAGILNYMALV). The Cytoplasmic segment spans residues 323–341 (DLLAEDFMNPRVRKSGRLQ). Residues 342–362 (LIISILLLVGIALMSLLGIWA) traverse the membrane as a helical segment.

It belongs to the ZIP transporter (TC 2.A.5) family.

The protein localises to the cell membrane. In terms of biological role, zinc transporter that may be involved in zinc uptake from the rhizosphere. This is Zinc transporter 9 (ZIP9) from Oryza sativa subsp. japonica (Rice).